The sequence spans 937 residues: Protocadherin alpha-7 (937 aa).

The signal sequence occupies residues 1-29 (MVCPNGYDPGGRHLLLFIIILAAWEAGRG). Cadherin domains are found at residues 30–133 (QLHY…PPVF), 134–242 (PATQ…APVF), 243–350 (DRTL…APQL), 351–455 (TLTS…APAF), 456–565 (AQPE…APAL), and 581–678 (VPRS…APKA). Residues 30 to 697 (QLHYSVPEEA…GPETELVDVN (668 aa)) are Extracellular-facing. A disulfide bond links C96 and C102. 2 N-linked (GlcNAc...) asparagine glycosylation sites follow: N254 and N265. N548 carries N-linked (GlcNAc...) asparagine glycosylation. Residues 698–718 (VYLIIAICAVSSLLVLTLLLY) traverse the membrane as a helical segment. Over 719–937 (TALRCSAPSS…GNSTTDNSDQ (219 aa)) the chain is Cytoplasmic. Disordered regions lie at residues 755 to 795 (RQRV…DWRY) and 814 to 937 (ILRA…NSDQ). 5 PXXP repeats span residues 774–777 (PSLP), 786–789 (PRQP), 819–822 (PGGP), 860–863 (PGNP), and 878–881 (PGSP). The 5 X 4 AA repeats of P-X-X-P stretch occupies residues 774–881 (PSLPQGPSST…PDKFIIPGSP (108 aa)). The segment covering 775 to 787 (SLPQGPSSTDNPR) has biased composition (polar residues). The span at 896–910 (DKSDFITFGKKEETK) shows a compositional bias: basic and acidic residues.

As to quaternary structure, forms homodimers in trans (molecules expressed by two different cells). Forms promiscuous heterodimers in cis (at the plasma membrane of the same cell) with other protocadherins.

The protein localises to the cell membrane. Functionally, calcium-dependent cell-adhesion protein involved in cells self-recognition and non-self discrimination. Thereby, it is involved in the establishment and maintenance of specific neuronal connections in the brain. In Homo sapiens (Human), this protein is Protocadherin alpha-7.